The chain runs to 446 residues: Maltoporin (446 aa).

Residues 1–25 form the signal peptide; the sequence is MMTTLRKLPLAVAVAAGMMSVQAMA.

It belongs to the porin LamB (TC 1.B.3) family. Homotrimer formed of three 18-stranded antiparallel beta-barrels, containing three independent channels.

The protein resides in the cell outer membrane. The catalysed reaction is beta-maltose(in) = beta-maltose(out). Involved in the transport of maltose and maltodextrins. In Escherichia fergusonii (strain ATCC 35469 / DSM 13698 / CCUG 18766 / IAM 14443 / JCM 21226 / LMG 7866 / NBRC 102419 / NCTC 12128 / CDC 0568-73), this protein is Maltoporin.